Here is a 276-residue protein sequence, read N- to C-terminus: Small ribosomal subunit protein uS2 (276 aa).

Residues 254-276 form a disordered region; that stretch reads LAGATAAAPAEGAVATETTPTEG. Residues 255–276 are compositionally biased toward low complexity; it reads AGATAAAPAEGAVATETTPTEG.

It belongs to the universal ribosomal protein uS2 family.

The chain is Small ribosomal subunit protein uS2 from Mycobacterium ulcerans (strain Agy99).